Reading from the N-terminus, the 267-residue chain is Palmitoyltransferase ZDHHC12 (267 aa).

The Cytoplasmic segment spans residues 1 to 9 (MAPWALLSP). A helical membrane pass occupies residues 10–30 (GVLVRTGHTVLTWGITLVLFL). Residues 31-43 (HDTELRQWEEQGE) are Lumenal-facing. The helical transmembrane segment at 44–64 (LLLPLTFLLLVLGSLLLYLAV) threads the bilayer. Over 65–140 (SLMDPGYVNV…ENCVGERNHP (76 aa)) the chain is Cytoplasmic. The 51-residue stretch at 97–147 (RRCRYCLVLQPLRARHCRECRRCVRRYDHHCPWMENCVGERNHPLFVVYLA) folds into the DHHC domain. C127 functions as the S-palmitoyl cysteine intermediate in the catalytic mechanism. Residues 141-161 (LFVVYLALQLVVLLWGLYLAW) form a helical membrane-spanning segment. Residues 162–178 (SGLRFFQPWGQWLRSSG) lie on the Lumenal side of the membrane. Residues 179-199 (LLFATFLLLSLFSLVASLLLV) form a helical membrane-spanning segment. Topologically, residues 200-267 (SHLYLVASNT…EEEEGSSPAV (68 aa)) are cytoplasmic.

This sequence belongs to the DHHC palmitoyltransferase family. As to expression, widely expressed.

It is found in the golgi apparatus membrane. The protein resides in the endoplasmic reticulum membrane. The catalysed reaction is L-cysteinyl-[protein] + hexadecanoyl-CoA = S-hexadecanoyl-L-cysteinyl-[protein] + CoA. In terms of biological role, palmitoyltransferase that catalyzes the addition of palmitate onto various protein substrates. Has a palmitoyltransferase activity toward gephyrin/GPHN, regulating its clustering at synapses and its function in gamma-aminobutyric acid receptor clustering. Thereby, indirectly regulates GABAergic synaptic transmission. Negatively regulates NLRP3-driven inflammation. Catalyzes NLRP3 palmitoylation, leading to its degradation via the chaperone-mediated autophagy (CMA) process. This is Palmitoyltransferase ZDHHC12 from Homo sapiens (Human).